Consider the following 315-residue polypeptide: Replication factor C small subunit (315 aa).

43–50 contacts ATP; it reads GSPGVGKT.

Belongs to the activator 1 small subunits family. RfcS subfamily. As to quaternary structure, heteromultimer composed of small subunits (RfcS) and large subunits (RfcL).

In terms of biological role, part of the RFC clamp loader complex which loads the PCNA sliding clamp onto DNA. This chain is Replication factor C small subunit, found in Methanococcus maripaludis (strain DSM 14266 / JCM 13030 / NBRC 101832 / S2 / LL).